A 163-amino-acid chain; its full sequence is Neurotrophin-3 (163 aa).

The N-terminal stretch at 1–3 is a signal peptide; that stretch reads IQS. Positions 4-119 are excised as a propeptide; sequence TSMDQGILTE…VLNRTSRRKR (116 aa). The N-linked (GlcNAc...) asparagine glycan is linked to asparagine 112. The interval 113–133 is disordered; sequence RTSRRKREGKSHRGEYSVCDS. The span at 123–133 shows a compositional bias: basic and acidic residues; sequence SHRGEYSVCDS.

Belongs to the NGF-beta family.

Its subcellular location is the secreted. Its function is as follows. Seems to promote the survival of visceral and proprioceptive sensory neurons. The sequence is that of Neurotrophin-3 (NTF3) from Charina bottae (Northern rubber boa).